The following is a 239-amino-acid chain: Purine nucleoside phosphorylase DeoD-type (239 aa).

Histidine 5 lines the a purine D-ribonucleoside pocket. Residues glycine 21, arginine 25, arginine 44, and 89–92 (RVGS) each bind phosphate. Residues 180-182 (EME) and 204-205 (SD) each bind a purine D-ribonucleoside. The active-site Proton donor is aspartate 205.

It belongs to the PNP/UDP phosphorylase family. In terms of assembly, homohexamer; trimer of homodimers.

It carries out the reaction a purine D-ribonucleoside + phosphate = a purine nucleobase + alpha-D-ribose 1-phosphate. It catalyses the reaction a purine 2'-deoxy-D-ribonucleoside + phosphate = a purine nucleobase + 2-deoxy-alpha-D-ribose 1-phosphate. Catalyzes the reversible phosphorolytic breakdown of the N-glycosidic bond in the beta-(deoxy)ribonucleoside molecules, with the formation of the corresponding free purine bases and pentose-1-phosphate. This Klebsiella pneumoniae protein is Purine nucleoside phosphorylase DeoD-type.